A 200-amino-acid polypeptide reads, in one-letter code: Ependymin-related protein 1 (200 aa).

The signal sequence occupies residues 1–17 (MILQAALFLAGLTVVSG). 3 N-linked (GlcNAc...) asparagine glycosylation sites follow: Asn-36, Asn-124, and Asn-136.

The protein belongs to the ependymin family. In terms of tissue distribution, component of the acid-soluble and acid-insoluble organic matrix of prismatic shell layers (at protein level). Expressed discontinuously in the anterior zone of the outer fold of the mantle where its expression correlates with shell pigmentation.

Its subcellular location is the secreted. The sequence is that of Ependymin-related protein 1 from Haliotis asinina (Donkey's ear abalone).